The primary structure comprises 419 residues: Histidine--tRNA ligase (419 aa).

This sequence belongs to the class-II aminoacyl-tRNA synthetase family. Homodimer.

Its subcellular location is the cytoplasm. The catalysed reaction is tRNA(His) + L-histidine + ATP = L-histidyl-tRNA(His) + AMP + diphosphate + H(+). This is Histidine--tRNA ligase from Thiobacillus denitrificans (strain ATCC 25259 / T1).